The chain runs to 235 residues: Exosome complex component Rrp4 (235 aa).

Positions glycine 67–glutamine 139 constitute an S1 motif domain. Positions glycine 149–alanine 205 constitute a KH domain.

Belongs to the RRP4 family. As to quaternary structure, component of the archaeal exosome complex. Forms a trimer of Rrp4 and/or Csl4 subunits. The trimer associates with a hexameric ring-like arrangement composed of 3 Rrp41-Rrp42 heterodimers.

It localises to the cytoplasm. Non-catalytic component of the exosome, which is a complex involved in RNA degradation. Increases the RNA binding and the efficiency of RNA degradation. Confers strong poly(A) specificity to the exosome. The protein is Exosome complex component Rrp4 of Aeropyrum pernix (strain ATCC 700893 / DSM 11879 / JCM 9820 / NBRC 100138 / K1).